Here is a 405-residue protein sequence, read N- to C-terminus: Acetate kinase (405 aa).

N7 is a binding site for Mg(2+). K14 contacts ATP. Substrate is bound at residue R92. The active-site Proton donor/acceptor is the D149. Residues 209–213 (HLGNG) and 284–286 (DMR) each bind ATP. E389 contacts Mg(2+).

This sequence belongs to the acetokinase family. In terms of assembly, homodimer. The cofactor is Mg(2+). Mn(2+) is required as a cofactor.

Its subcellular location is the cytoplasm. The catalysed reaction is acetate + ATP = acetyl phosphate + ADP. It participates in metabolic intermediate biosynthesis; acetyl-CoA biosynthesis; acetyl-CoA from acetate: step 1/2. Catalyzes the formation of acetyl phosphate from acetate and ATP. Can also catalyze the reverse reaction. This is Acetate kinase from Borreliella burgdorferi (strain ZS7) (Borrelia burgdorferi).